We begin with the raw amino-acid sequence, 178 residues long: Deoxycytidylate deaminase (178 aa).

Residues 14-145 (EWPEYFMAVA…EETTAARLLF (132 aa)) form the CMP/dCMP-type deaminase domain. His84 lines the Zn(2+) pocket. Glu86 (proton donor) is an active-site residue. The Zn(2+) site is built by Cys110 and Cys113. Phosphoserine is present on Ser174.

The protein belongs to the cytidine and deoxycytidylate deaminase family. In terms of assembly, homohexamer. Zn(2+) is required as a cofactor.

It catalyses the reaction dCMP + H2O + H(+) = dUMP + NH4(+). It carries out the reaction 5-hydroxymethyl-dCMP + H2O + H(+) = 5-hydroxymethyl-dUMP + NH4(+). With respect to regulation, allosteric enzyme whose activity is greatly influenced by the end products of its metabolic pathway, dCTP and dTTP. Its function is as follows. Catalyzes the deamination of dCMP to dUMP, providing the nucleoside monophosphate substrate for the thymidylate synthase/TYMS. Also, part of a nucleotide salvage pathway that eliminates epigenetically modified 5-hydroxymethyl-dCMP (hmdCMP) in a two-step process entailing deamination to cytotoxic 5-hydroxymethyl-dUMP (hmdUMP), followed by its hydrolysis into 5-hydroxymethyluracil (hmU) and 2-deoxy-D-ribose 5-phosphate (deoxyribosephosphate). Catalyzes the first step in that pathway, the deamination of 5-hydroxymethyl-dCMP (hmdCMP). This Mus musculus (Mouse) protein is Deoxycytidylate deaminase.